We begin with the raw amino-acid sequence, 872 residues long: Alanine--tRNA ligase (872 aa).

Zn(2+) contacts are provided by His-567, His-571, Cys-669, and His-673.

It belongs to the class-II aminoacyl-tRNA synthetase family. The cofactor is Zn(2+).

It is found in the cytoplasm. The enzyme catalyses tRNA(Ala) + L-alanine + ATP = L-alanyl-tRNA(Ala) + AMP + diphosphate. Functionally, catalyzes the attachment of alanine to tRNA(Ala) in a two-step reaction: alanine is first activated by ATP to form Ala-AMP and then transferred to the acceptor end of tRNA(Ala). Also edits incorrectly charged Ser-tRNA(Ala) and Gly-tRNA(Ala) via its editing domain. The polypeptide is Alanine--tRNA ligase (Streptococcus pyogenes serotype M5 (strain Manfredo)).